A 185-amino-acid polypeptide reads, in one-letter code: Large ribosomal subunit protein uL30 (185 aa).

Belongs to the universal ribosomal protein uL30 family. In terms of assembly, part of the 50S ribosomal subunit.

The sequence is that of Large ribosomal subunit protein uL30 from Caldivirga maquilingensis (strain ATCC 700844 / DSM 13496 / JCM 10307 / IC-167).